The following is a 403-amino-acid chain: Putative glutamate--cysteine ligase 2 (403 aa).

A disordered region spans residues 370–403 (ESAAQRRAPQAARRRIRASSEPLGPMSMWPERLH).

It belongs to the glutamate--cysteine ligase type 2 family. YbdK subfamily.

The enzyme catalyses L-cysteine + L-glutamate + ATP = gamma-L-glutamyl-L-cysteine + ADP + phosphate + H(+). Its function is as follows. ATP-dependent carboxylate-amine ligase which exhibits weak glutamate--cysteine ligase activity. The polypeptide is Putative glutamate--cysteine ligase 2 (Bordetella avium (strain 197N)).